The sequence spans 388 residues: Carbamoyl phosphate synthase small chain (388 aa).

The interval 1–192 is CPSase; sequence MPLSDAMPAL…FNPDGTVKNG (192 aa). Residues Ser-51, Gly-244, and Gly-246 each contribute to the L-glutamine site. A Glutamine amidotransferase type-1 domain is found at 196 to 382; it reads TVVALDFGVK…VHQMRTTKQA (187 aa). Residue Cys-272 is the Nucleophile of the active site. Residues Met-273, Gln-276, Asn-312, and Phe-315 each coordinate L-glutamine. Residues His-355 and Glu-357 contribute to the active site.

The protein belongs to the CarA family. As to quaternary structure, composed of two chains; the small (or glutamine) chain promotes the hydrolysis of glutamine to ammonia, which is used by the large (or ammonia) chain to synthesize carbamoyl phosphate. Tetramer of heterodimers (alpha,beta)4.

The enzyme catalyses hydrogencarbonate + L-glutamine + 2 ATP + H2O = carbamoyl phosphate + L-glutamate + 2 ADP + phosphate + 2 H(+). It catalyses the reaction L-glutamine + H2O = L-glutamate + NH4(+). It participates in amino-acid biosynthesis; L-arginine biosynthesis; carbamoyl phosphate from bicarbonate: step 1/1. It functions in the pathway pyrimidine metabolism; UMP biosynthesis via de novo pathway; (S)-dihydroorotate from bicarbonate: step 1/3. Functionally, small subunit of the glutamine-dependent carbamoyl phosphate synthetase (CPSase). CPSase catalyzes the formation of carbamoyl phosphate from the ammonia moiety of glutamine, carbonate, and phosphate donated by ATP, constituting the first step of 2 biosynthetic pathways, one leading to arginine and/or urea and the other to pyrimidine nucleotides. The small subunit (glutamine amidotransferase) binds and cleaves glutamine to supply the large subunit with the substrate ammonia. The chain is Carbamoyl phosphate synthase small chain from Nostoc sp. (strain PCC 7120 / SAG 25.82 / UTEX 2576).